A 509-amino-acid chain; its full sequence is Probable DNA ligase (509 aa).

D218 contributes to the ATP binding site. K220 serves as the catalytic N6-AMP-lysine intermediate. ATP is bound by residues R225, R240, E269, F302, R374, and K380.

It belongs to the ATP-dependent DNA ligase family. The cofactor is Mg(2+).

It carries out the reaction ATP + (deoxyribonucleotide)n-3'-hydroxyl + 5'-phospho-(deoxyribonucleotide)m = (deoxyribonucleotide)n+m + AMP + diphosphate.. DNA ligase that seals nicks in double-stranded DNA during DNA replication, DNA recombination and DNA repair. The protein is Probable DNA ligase of Nocardioides sp. (strain ATCC BAA-499 / JS614).